Here is a 164-residue protein sequence, read N- to C-terminus: Lipocalin-like 1 protein (164 aa).

The protein belongs to the calycin superfamily. Lipocalin family.

The sequence is that of Lipocalin-like 1 protein (LCNL1) from Homo sapiens (Human).